The following is a 103-amino-acid chain: MKKELILKFLWLEKSIAVCLDQKVGDSITPLTEFFFWPQKDAWEEMKNFLESQSWITQSDSVNLLNNITEVINFWQERDTNVIDRKHISNLREKFPDIIVIGQ.

This sequence belongs to the chloroplast-specific ribosomal protein cS23 family. Part of the 30S ribosomal subunit.

The protein resides in the plastid. It localises to the chloroplast. Its function is as follows. Probably a ribosomal protein or a ribosome-associated protein. This chain is Small ribosomal subunit protein cS23 (ycf65), found in Euglena granulata.